The following is a 199-amino-acid chain: 3-isopropylmalate dehydratase small subunit (199 aa).

Belongs to the LeuD family. LeuD type 1 subfamily. In terms of assembly, heterodimer of LeuC and LeuD.

The enzyme catalyses (2R,3S)-3-isopropylmalate = (2S)-2-isopropylmalate. It functions in the pathway amino-acid biosynthesis; L-leucine biosynthesis; L-leucine from 3-methyl-2-oxobutanoate: step 2/4. In terms of biological role, catalyzes the isomerization between 2-isopropylmalate and 3-isopropylmalate, via the formation of 2-isopropylmaleate. The sequence is that of 3-isopropylmalate dehydratase small subunit from Aeromonas salmonicida (strain A449).